The primary structure comprises 202 residues: Holliday junction branch migration complex subunit RuvA (202 aa).

Residues 1-63 are domain I; that stretch reads MIAFLSGRVV…EDSLTLFGFA (63 aa). Residues 64-142 are domain II; sequence DDDERDTFER…EPGGDTAATP (79 aa). The segment at 143-152 is flexible linker; sequence EQSAAAAPRN. The segment at 152-202 is domain III; sequence NWRAQVVSGLVNLGWSTREAEAAADAVAAEAGEQPDVAALLRSALRRLSRA.

The protein belongs to the RuvA family. In terms of assembly, homotetramer. Forms an RuvA(8)-RuvB(12)-Holliday junction (HJ) complex. HJ DNA is sandwiched between 2 RuvA tetramers; dsDNA enters through RuvA and exits via RuvB. An RuvB hexamer assembles on each DNA strand where it exits the tetramer. Each RuvB hexamer is contacted by two RuvA subunits (via domain III) on 2 adjacent RuvB subunits; this complex drives branch migration. In the full resolvosome a probable DNA-RuvA(4)-RuvB(12)-RuvC(2) complex forms which resolves the HJ.

The protein localises to the cytoplasm. Its function is as follows. The RuvA-RuvB-RuvC complex processes Holliday junction (HJ) DNA during genetic recombination and DNA repair, while the RuvA-RuvB complex plays an important role in the rescue of blocked DNA replication forks via replication fork reversal (RFR). RuvA specifically binds to HJ cruciform DNA, conferring on it an open structure. The RuvB hexamer acts as an ATP-dependent pump, pulling dsDNA into and through the RuvAB complex. HJ branch migration allows RuvC to scan DNA until it finds its consensus sequence, where it cleaves and resolves the cruciform DNA. The polypeptide is Holliday junction branch migration complex subunit RuvA (Thermobifida fusca (strain YX)).